The primary structure comprises 465 residues: L-seryl-tRNA(Sec) selenium transferase (465 aa).

At Lys294 the chain carries N6-(pyridoxal phosphate)lysine.

This sequence belongs to the SelA family. Pyridoxal 5'-phosphate is required as a cofactor.

The protein resides in the cytoplasm. The enzyme catalyses L-seryl-tRNA(Sec) + selenophosphate + H(+) = L-selenocysteinyl-tRNA(Sec) + phosphate. It functions in the pathway aminoacyl-tRNA biosynthesis; selenocysteinyl-tRNA(Sec) biosynthesis; selenocysteinyl-tRNA(Sec) from L-seryl-tRNA(Sec) (bacterial route): step 1/1. In terms of biological role, converts seryl-tRNA(Sec) to selenocysteinyl-tRNA(Sec) required for selenoprotein biosynthesis. The chain is L-seryl-tRNA(Sec) selenium transferase from Maridesulfovibrio salexigens (strain ATCC 14822 / DSM 2638 / NCIMB 8403 / VKM B-1763) (Desulfovibrio salexigens).